An 827-amino-acid chain; its full sequence is Glycerol-3-phosphate acyltransferase 1, mitochondrial (827 aa).

The Cytoplasmic segment spans residues 1–87 (MEESSVTVGT…FFNPSIPSLG (87 aa)). The interval 80–120 (NPSIPSLGLRNVIYINETHTRHRGWLARRLSYILFVQERDV) is important for mitochondrial localization. An intramembrane segment occupies 88–118 (LRNVIYINETHTRHRGWLARRLSYILFVQER). Residues 119–827 (DVHKGMFATS…LEYILSFVVL (709 aa)) lie on the Cytoplasmic side of the membrane. Positions 230–235 (HRSHID) match the HXXXXD motif motif. CoA is bound by residues R278, R279, K288, R293, and R328. At S380 the chain carries Phosphoserine. A CoA-binding site is contributed by R462. Phosphoserine is present on residues S687 and S694. K779 and K783 each carry N6-acetyllysine.

This sequence belongs to the GPAT/DAPAT family. Highest levels in liver, intermediate levels in muscle and kidney, and lowest levels in lung and brain.

It localises to the mitochondrion outer membrane. The enzyme catalyses sn-glycerol 3-phosphate + an acyl-CoA = a 1-acyl-sn-glycero-3-phosphate + CoA. It carries out the reaction (9Z,12Z)-octadecadienoyl-CoA + sn-glycerol 3-phosphate = 1-(9Z,12Z)-octadecadienoyl-sn-glycero-3-phosphate + CoA. The catalysed reaction is sn-glycerol 3-phosphate + (9Z)-octadecenoyl-CoA = 1-(9Z-octadecenoyl)-sn-glycero-3-phosphate + CoA. It catalyses the reaction sn-glycerol 3-phosphate + octadecanoyl-CoA = 1-octadecanoyl-sn-glycero-3-phosphate + CoA. The enzyme catalyses sn-glycerol 3-phosphate + hexadecanoyl-CoA = 1-hexadecanoyl-sn-glycero-3-phosphate + CoA. It carries out the reaction dodecanoyl-CoA + sn-glycerol 3-phosphate = 1-dodecanoyl-sn-glycerol 3-phosphate + CoA. The catalysed reaction is 1-acyl-sn-glycero-3-phospho-(1'-sn-glycerol) + an acyl-CoA = a 1,2-diacyl-sn-glycero-3-phospho-(1'-sn-glycerol) + CoA. It functions in the pathway phospholipid metabolism; CDP-diacylglycerol biosynthesis; CDP-diacylglycerol from sn-glycerol 3-phosphate: step 1/3. Functionally, mitochondrial membrane protein that catalyzes the essential first step of biosynthesis of glycerolipids such as triglycerides, phosphatidic acids and lysophosphatidic acids. Esterifies acyl-group from acyl-coenzyme A (acyl-CoA) to the sn-1 position of glycerol-3-phosphate, to produce lysophosphatidic acid. Has a narrow hydrophobic binding cleft that selects for a linear acyl chain. Catalytic activity is higher for substrates with a 16-carbon acyl chain. The protein is Glycerol-3-phosphate acyltransferase 1, mitochondrial of Mus musculus (Mouse).